Here is a 247-residue protein sequence, read N- to C-terminus: Cell division protein ZapD (247 aa).

Belongs to the ZapD family. As to quaternary structure, interacts with FtsZ.

It is found in the cytoplasm. In terms of biological role, cell division factor that enhances FtsZ-ring assembly. Directly interacts with FtsZ and promotes bundling of FtsZ protofilaments, with a reduction in FtsZ GTPase activity. The polypeptide is Cell division protein ZapD (Salmonella arizonae (strain ATCC BAA-731 / CDC346-86 / RSK2980)).